The chain runs to 101 residues: uncharacterized protein (101 aa).

The helical transmembrane segment at 77–99 (VFSFMNGFTDGCICGTIIILCLI) threads the bilayer.

It is found in the membrane. This is an uncharacterized protein from Acanthamoeba polyphaga mimivirus (APMV).